The primary structure comprises 280 residues: uncharacterized protein (280 aa).

Basic residues predominate over residues 1–10 (MSSSIKKLKK). Positions 1 to 45 (MSSSIKKLKKDTKDTDKTPSKKIYQETHNSEDSEDSEDSDNENNT) are disordered. Basic and acidic residues predominate over residues 11–31 (DTKDTDKTPSKKIYQETHNSE). The span at 32–41 (DSEDSEDSDN) shows a compositional bias: acidic residues.

This is an uncharacterized protein from Acanthamoeba polyphaga mimivirus (APMV).